We begin with the raw amino-acid sequence, 319 residues long: Coiled-coil domain-containing protein PF3D7_1144200 (319 aa).

Residues 1–12 (MSEEHSNDHIED) show a composition bias toward basic and acidic residues. Disordered stretches follow at residues 1-43 (MSEE…SESS) and 112-158 (KLEK…NQHN). Polar residues predominate over residues 16 to 26 (CSQNCDETNSP). Basic and acidic residues-rich tracts occupy residues 27–36 (KNEKDEKDFK) and 112–131 (KLEK…KKVT). Coiled coils occupy residues 100–134 (DLAN…TNDS), 166–242 (ELNE…IKKN), and 281–310 (NSNC…LINI). The span at 132–150 (NDSTNNKNKNNSVPFLNEN) shows a compositional bias: low complexity.

The polypeptide is Coiled-coil domain-containing protein PF3D7_1144200 (Plasmodium falciparum (isolate 3D7)).